The sequence spans 553 residues: MTELSIRPEEIRDALREYVDSFQATSGDREEVGRVVVTGDGIARVEGLPHTMTNELLEFSGGVLGLALNLEVGEIGCVILGDAEHIEEGQEVRRTGEILAVPVGDGFLGRVVDPLGRPIDGLGDIAAAGTRALELQAPSVVQRQPVKEPLQTGIKAIDAMTAIGRGQRQLIIGDRQTGKTTVAIDAIINQRDNWASGDPKKQVKCVYVAIGQKKTTIREVVNTLEEAGALAYTTIVAAPADQPAGFKYIAPYTGSAIGQYWMYNGQHSLVVFDDLSKQAEAYRAISLLLRRPPGREAYPGDVFYLHSRLLERCAKLSDELGGGSLTGLPIIETKANDISAYIPTNVISITDGQIFLESDLFNQGVRPAINVGTSVSRVGGSAQVKAMKSVAGRLRLDLAQYRELEAFSAFGSDLDKASRDQLARGARLVELLKQPQNKPFSVERQVVSIWAGTTGKLDDVPVEDIRRFEAEFLDFVGRTHGAIYDTIVNTGKLGDDLVSSLESAIAEFKEQFTLSSGKQLVNEAAPEALDPSAVEREEIAVHHRKPSDETAGH.

173 to 180 is an ATP binding site; it reads GDRQTGKT. The disordered stretch occupies residues 527–553; that stretch reads EALDPSAVEREEIAVHHRKPSDETAGH. Residues 533 to 553 are compositionally biased toward basic and acidic residues; that stretch reads AVEREEIAVHHRKPSDETAGH.

It belongs to the ATPase alpha/beta chains family. In terms of assembly, F-type ATPases have 2 components, CF(1) - the catalytic core - and CF(0) - the membrane proton channel. CF(1) has five subunits: alpha(3), beta(3), gamma(1), delta(1), epsilon(1). CF(0) has three main subunits: a(1), b(2) and c(9-12). The alpha and beta chains form an alternating ring which encloses part of the gamma chain. CF(1) is attached to CF(0) by a central stalk formed by the gamma and epsilon chains, while a peripheral stalk is formed by the delta and b chains.

The protein resides in the cell membrane. The catalysed reaction is ATP + H2O + 4 H(+)(in) = ADP + phosphate + 5 H(+)(out). Its function is as follows. Produces ATP from ADP in the presence of a proton gradient across the membrane. The alpha chain is a regulatory subunit. This is ATP synthase subunit alpha from Parafrankia sp. (strain EAN1pec).